A 344-amino-acid chain; its full sequence is Uroporphyrinogen decarboxylase (344 aa).

Residues 23–27 (RQAGR), Asp73, Tyr149, Thr204, and His321 contribute to the substrate site.

The protein belongs to the uroporphyrinogen decarboxylase family. Homodimer.

It is found in the cytoplasm. It catalyses the reaction uroporphyrinogen III + 4 H(+) = coproporphyrinogen III + 4 CO2. It functions in the pathway porphyrin-containing compound metabolism; protoporphyrin-IX biosynthesis; coproporphyrinogen-III from 5-aminolevulinate: step 4/4. In terms of biological role, catalyzes the decarboxylation of four acetate groups of uroporphyrinogen-III to yield coproporphyrinogen-III. The protein is Uroporphyrinogen decarboxylase of Francisella tularensis subsp. novicida (strain U112).